Consider the following 69-residue polypeptide: RICYLAPRDTQICAPGQEICYLKSWDDGSGSIKGKRLEFGCAATCPTVKPGIDIKCCSTDKCNPHPKLA.

4 cysteine pairs are disulfide-bonded: C3–C20, C13–C41, C45–C56, and C57–C62.

This sequence belongs to the three-finger toxin family. Long-chain subfamily. Type II alpha-neurotoxin sub-subfamily. As to expression, expressed by the venom gland.

The protein localises to the secreted. Functionally, binds with high affinity to muscular nicotinic acetylcholine receptors (nAChRs), whereas it binds with a low affinity to neuronal alpha-7/CHRNA7 nAChRs. The chain is Alpha-elapitoxin-Lc2c from Laticauda colubrina (Yellow-lipped sea krait).